Here is a 41-residue protein sequence, read N- to C-terminus: MLLLQILFALLQRYRYKPHSLSDGLLLALHFLLFFRALPKS.

In terms of biological role, may play a role in host modulation. This chain is ORF3c protein, found in Severe acute respiratory syndrome coronavirus 2 (2019-nCoV).